Here is a 443-residue protein sequence, read N- to C-terminus: Serine/threonine-protein phosphatase 2A 55 kDa regulatory subunit B beta isoform (443 aa).

WD repeat units lie at residues 22 to 61 (TEAD…KNQV), 87 to 128 (EIEE…KRPE), 171 to 209 (AHTY…QSFN), and 220 to 260 (ELTE…CVTG). Ser-275 is modified (phosphoserine). WD repeat units lie at residues 279-317 (KLSS…RPIE), 334-375 (ENDC…DVTL), and 410-442 (DFSK…QDKV). The residue at position 298 (Thr-298) is a Phosphothreonine.

The protein belongs to the phosphatase 2A regulatory subunit B family. PP2A consists of a common heterodimeric core enzyme, composed of a 36 kDa catalytic subunit (subunit C) and a 65 kDa constant regulatory subunit (PR65 or subunit A), that associates with a variety of regulatory subunits. Proteins that associate with the core dimer include three families of regulatory subunits B (the R2/B/PR55/B55, R3/B''/PR72/PR130/PR59 and R5/B'/B56 families), the 48 kDa variable regulatory subunit, viral proteins, and cell signaling molecules. Interacts with TOMM22. Interacts with IER5 (via N- and C-terminal regions). As to expression, brain.

The protein resides in the cytoplasm. The protein localises to the cytoskeleton. Its subcellular location is the membrane. Its function is as follows. The B regulatory subunit might modulate substrate selectivity and catalytic activity, and might also direct the localization of the catalytic enzyme to a particular subcellular compartment. The protein is Serine/threonine-protein phosphatase 2A 55 kDa regulatory subunit B beta isoform (PPP2R2B) of Sus scrofa (Pig).